The chain runs to 392 residues: Imidazolonepropionase (392 aa).

2 residues coordinate Fe(3+): His-69 and His-71. The Zn(2+) site is built by His-69 and His-71. Residues Arg-78, Tyr-136, and His-163 each coordinate 4-imidazolone-5-propanoate. Position 136 (Tyr-136) interacts with N-formimidoyl-L-glutamate. Residue His-226 participates in Fe(3+) binding. A Zn(2+)-binding site is contributed by His-226. Position 229 (Gln-229) interacts with 4-imidazolone-5-propanoate. A Fe(3+)-binding site is contributed by Asp-302. Asp-302 is a Zn(2+) binding site. Asn-304 and Gly-306 together coordinate N-formimidoyl-L-glutamate. Residue Ser-307 coordinates 4-imidazolone-5-propanoate.

It belongs to the metallo-dependent hydrolases superfamily. HutI family. The cofactor is Zn(2+). Fe(3+) is required as a cofactor.

It is found in the cytoplasm. The enzyme catalyses 4-imidazolone-5-propanoate + H2O = N-formimidoyl-L-glutamate. It functions in the pathway amino-acid degradation; L-histidine degradation into L-glutamate; N-formimidoyl-L-glutamate from L-histidine: step 3/3. Catalyzes the hydrolytic cleavage of the carbon-nitrogen bond in imidazolone-5-propanoate to yield N-formimidoyl-L-glutamate. It is the third step in the universal histidine degradation pathway. The polypeptide is Imidazolonepropionase (Salinispora tropica (strain ATCC BAA-916 / DSM 44818 / JCM 13857 / NBRC 105044 / CNB-440)).